The chain runs to 249 residues: Histone H1 (249 aa).

Low complexity-rich tracts occupy residues 1–19 (MSDS…QTAS) and 27–43 (KKPA…TTAP). Disordered regions lie at residues 1-53 (MSDS…QQMV) and 105-249 (QTKG…ATKK). In terms of domain architecture, H15 spans 45–119 (THPPTQQMVD…GASGSFKLSA (75 aa)). Basic and acidic residues predominate over residues 121–134 (SKKEPKPKVSSVEK). Residues 146 to 158 (AKKKTISATKKPK) show a composition bias toward basic residues. Over residues 173–190 (KSVDKKKAEKAKAKDAKK) the composition is skewed to basic and acidic residues. Low complexity predominate over residues 195-233 (KAKPTTAKAKSSAAKPKTPKPKTTSAKPKKVVAAASPKK). The span at 234–249 (AAAKKPKAKTASATKK) shows a compositional bias: basic residues.

Belongs to the histone H1/H5 family.

Its subcellular location is the nucleus. The protein localises to the chromosome. Functionally, histones H1 are necessary for the condensation of nucleosome chains into higher-order structures. This Drosophila hydei (Fruit fly) protein is Histone H1 (His1).